Here is a 616-residue protein sequence, read N- to C-terminus: Dihydroxy-acid dehydratase (616 aa).

A Mg(2+)-binding site is contributed by Asp-81. Cys-122 is a [2Fe-2S] cluster binding site. Residues Asp-123 and Lys-124 each coordinate Mg(2+). N6-carboxylysine is present on Lys-124. Position 195 (Cys-195) interacts with [2Fe-2S] cluster. Residue Glu-491 participates in Mg(2+) binding. The Proton acceptor role is filled by Ser-517.

Belongs to the IlvD/Edd family. Homodimer. Requires [2Fe-2S] cluster as cofactor. Mg(2+) is required as a cofactor.

The enzyme catalyses (2R)-2,3-dihydroxy-3-methylbutanoate = 3-methyl-2-oxobutanoate + H2O. The catalysed reaction is (2R,3R)-2,3-dihydroxy-3-methylpentanoate = (S)-3-methyl-2-oxopentanoate + H2O. The protein operates within amino-acid biosynthesis; L-isoleucine biosynthesis; L-isoleucine from 2-oxobutanoate: step 3/4. Its pathway is amino-acid biosynthesis; L-valine biosynthesis; L-valine from pyruvate: step 3/4. In terms of biological role, functions in the biosynthesis of branched-chain amino acids. Catalyzes the dehydration of (2R,3R)-2,3-dihydroxy-3-methylpentanoate (2,3-dihydroxy-3-methylvalerate) into 2-oxo-3-methylpentanoate (2-oxo-3-methylvalerate) and of (2R)-2,3-dihydroxy-3-methylbutanoate (2,3-dihydroxyisovalerate) into 2-oxo-3-methylbutanoate (2-oxoisovalerate), the penultimate precursor to L-isoleucine and L-valine, respectively. This Escherichia coli (strain 55989 / EAEC) protein is Dihydroxy-acid dehydratase.